The sequence spans 308 residues: MQNAVSQAISQGIHVRREILGSLTYEQRVFLLEDLFVDLFGHQHVMLQRWAALTGQSAQVDTGYIAQFVASIVLGEPGQGFRGKGDDLADGSEVKSAANISGVDRPRWNHNLGSLDDDEHRRSRGLPTAGEEYLGVPYMFYLLVDRPHGVSDPAPIRIRAWCIDAQEDGDWRDLFETFLTSRRGRTYNFQLHPPVGYDDDVVVNTLGNLDFSNVLVFDARLSLADRDRPEIDWHVPLPTQVIPVTGRTRALRYGGRGARPTRLTNTADIVLGTNDLGALFPGVLAPRDSYDLATVSEIETEAEVEEYS.

The enzyme catalyses Endonucleolytic cleavage of DNA to give specific double-stranded fragments with terminal 5'-phosphates.. Its function is as follows. A P subtype restriction enzyme that recognizes the double-stranded sequence 5'-GATNNNNATC-3' and cleaves after N-5. This is Type II restriction enzyme MamI from Microbacterium ammoniaphilum.